A 248-amino-acid polypeptide reads, in one-letter code: Delayed minus-nitrogen induction protein 2 (248 aa).

Helical transmembrane passes span 26-46, 110-130, 144-164, and 186-206; these read IFSN…CCSC, VHPV…VLTI, ISCL…MALA, and GVAA…FSLI.

Belongs to the SUR7 family.

The protein resides in the membrane. In Schizosaccharomyces pombe (strain 972 / ATCC 24843) (Fission yeast), this protein is Delayed minus-nitrogen induction protein 2 (dni2).